We begin with the raw amino-acid sequence, 199 residues long: Large ribosomal subunit protein bL25 (199 aa).

The protein belongs to the bacterial ribosomal protein bL25 family. CTC subfamily. In terms of assembly, part of the 50S ribosomal subunit; part of the 5S rRNA/L5/L18/L25 subcomplex. Contacts the 5S rRNA. Binds to the 5S rRNA independently of L5 and L18.

Its function is as follows. This is one of the proteins that binds to the 5S RNA in the ribosome where it forms part of the central protuberance. The protein is Large ribosomal subunit protein bL25 of Chloroherpeton thalassium (strain ATCC 35110 / GB-78).